The sequence spans 334 residues: uncharacterized protein (334 aa).

The protein belongs to the ADP-ribosylglycohydrolase family.

This is an uncharacterized protein from Escherichia coli (strain K12).